Here is a 230-residue protein sequence, read N- to C-terminus: Uracil-DNA glycosylase (230 aa).

Asp-70 functions as the Proton acceptor in the catalytic mechanism.

Belongs to the uracil-DNA glycosylase (UDG) superfamily. UNG family.

It is found in the cytoplasm. It carries out the reaction Hydrolyzes single-stranded DNA or mismatched double-stranded DNA and polynucleotides, releasing free uracil.. Functionally, excises uracil residues from the DNA which can arise as a result of misincorporation of dUMP residues by DNA polymerase or due to deamination of cytosine. The protein is Uracil-DNA glycosylase of Pseudomonas entomophila (strain L48).